The following is a 330-amino-acid chain: MIKAAIVGGSGYIGGELIRLLSMHPEVEITTITSRKFAGKKVHKVHPNLRGLNLRFTDKYEFDADVIFLAVPHGTSMRIIGEFLGSAKIIDLSADFRVSKDLYEKYYGSHEKPELIDKFVYGLPELHRKEIKRAELVANPGCNATAVILALYPFRDVTSEAIVDLKVSSSAGGRRENVASIHPERSHVVRVYKPFHHRHEAEVLQETGVKAMFTVHSVDIVRGLLATTYFKFEGSEKDLLKRLLMYRGEPFIRLVTDKGGLQRYPDPKYVIGSNFVDIGFSYDSENSRAIVFSALDNLIKGGAGQAVQNMNIMFGFDETLGLNYYPLYPG.

Residues 10–13 (SGYI) and 34–36 (SRK) each bind NADP(+). Cysteine 142 is an active-site residue. Asparagine 297 lines the NADP(+) pocket.

The protein belongs to the NAGSA dehydrogenase family. Type 1 subfamily. LysY sub-subfamily.

Its subcellular location is the cytoplasm. It catalyses the reaction [amino-group carrier protein]-C-terminal-N-(1-carboxy-5-oxopentan-1-yl)-L-glutamine + phosphate + NADP(+) = [amino-group carrier protein]-C-terminal-N-(1-carboxy-5-phosphooxy-5-oxopentan-1-yl)-L-glutamine + NADPH + H(+). The enzyme catalyses [amino-group carrier protein]-C-terminal-gamma-(L-glutamyl-5-semialdehyde)-L-glutamate + phosphate + NADP(+) = [amino-group carrier protein]-C-terminal-gamma-(5-phospho-L-glutamyl)-L-glutamate + NADPH + H(+). It functions in the pathway amino-acid biosynthesis; L-lysine biosynthesis via AAA pathway; L-lysine from L-alpha-aminoadipate (Thermus route): step 3/5. Its pathway is amino-acid biosynthesis; L-arginine biosynthesis. Functionally, involved in both the arginine and lysine biosynthetic pathways. The chain is Putative [LysW]-L-2-aminoadipate/[LysW]-L-glutamate phosphate reductase from Pyrococcus abyssi (strain GE5 / Orsay).